A 75-amino-acid chain; its full sequence is Sec-independent protein translocase protein TatA (75 aa).

The helical transmembrane segment at 1-21 (MGMPSMPELLIVLAIVVLLFG) threads the bilayer. The interval 47 to 75 (DEEEEVKEITKKEEPKVEAAAEEKKSENA) is disordered. Basic and acidic residues predominate over residues 53-75 (KEITKKEEPKVEAAAEEKKSENA).

The protein belongs to the TatA/E family. As to quaternary structure, the Tat system comprises two distinct complexes: a TatABC complex, containing multiple copies of TatA, TatB and TatC subunits, and a separate TatA complex, containing only TatA subunits. Substrates initially bind to the TatABC complex, which probably triggers association of the separate TatA complex to form the active translocon.

Its subcellular location is the cell inner membrane. In terms of biological role, part of the twin-arginine translocation (Tat) system that transports large folded proteins containing a characteristic twin-arginine motif in their signal peptide across membranes. TatA could form the protein-conducting channel of the Tat system. The sequence is that of Sec-independent protein translocase protein TatA from Sulfurovum sp. (strain NBC37-1).